We begin with the raw amino-acid sequence, 156 residues long: 3-dehydroquinate dehydratase (156 aa).

Tyrosine 24 acts as the Proton acceptor in catalysis. Asparagine 76, histidine 82, and aspartate 89 together coordinate substrate. Histidine 102 (proton donor) is an active-site residue. Residues isoleucine 103 to serine 104 and arginine 113 each bind substrate.

Belongs to the type-II 3-dehydroquinase family. As to quaternary structure, homododecamer.

It carries out the reaction 3-dehydroquinate = 3-dehydroshikimate + H2O. The protein operates within metabolic intermediate biosynthesis; chorismate biosynthesis; chorismate from D-erythrose 4-phosphate and phosphoenolpyruvate: step 3/7. Catalyzes a trans-dehydration via an enolate intermediate. This chain is 3-dehydroquinate dehydratase, found in Nitrobacter winogradskyi (strain ATCC 25391 / DSM 10237 / CIP 104748 / NCIMB 11846 / Nb-255).